The following is a 145-amino-acid chain: Large ribosomal subunit protein uL13 (145 aa).

This sequence belongs to the universal ribosomal protein uL13 family. As to quaternary structure, part of the 50S ribosomal subunit.

In terms of biological role, this protein is one of the early assembly proteins of the 50S ribosomal subunit, although it is not seen to bind rRNA by itself. It is important during the early stages of 50S assembly. In Exiguobacterium sibiricum (strain DSM 17290 / CCUG 55495 / CIP 109462 / JCM 13490 / 255-15), this protein is Large ribosomal subunit protein uL13.